A 313-amino-acid chain; its full sequence is Guanine nucleotide-binding protein-like 3-like protein (313 aa).

Positions Met-1–Thr-14 are enriched in basic residues. Residues Met-1–Lys-41 are disordered. Residues Arg-15 to Asn-27 show a composition bias toward basic and acidic residues. Residues Ser-95–Asp-98, Gly-178–Asn-185, and Thr-212–Ser-215 contribute to the GTP site.

Belongs to the MMR1/HSR1 GTP-binding protein family.

The protein localises to the nucleus. It localises to the nucleolus. In terms of biological role, required for normal processing of ribosomal pre-rRNA. Required for cell proliferation. Binds GTP. This chain is Guanine nucleotide-binding protein-like 3-like protein, found in Encephalitozoon cuniculi (strain GB-M1) (Microsporidian parasite).